The following is a 549-amino-acid chain: RNA-induced transcriptional silencing complex protein tas3 (549 aa).

Disordered regions lie at residues 89–111, 126–184, 202–225, 298–361, and 381–430; these read KNSP…VRAS, DGKE…SDSI, IRSS…SSKS, LDNF…HLEK, and AHFH…PLAS. The segment covering 298–307 has biased composition (polar residues); it reads LDNFNRPSQQ. Basic and acidic residues-rich tracts occupy residues 328–361 and 403–416; these read YDSY…HLEK and SDRQ…ELPT. The segment covering 419 to 430 has biased composition (polar residues); the sequence is LNASDSHNPLAS.

As to quaternary structure, ago1, chp1 and tas3 interact to form the core of the RNA-induced transcriptional silencing (RITS) complex. The RITS complex interacts with the RDRC complex via interaction between ago1 and hrr1. Clr4 has a role in mediating this interaction.

It localises to the nucleus. The protein localises to the cytoplasm. It is found in the cytoskeleton. The protein resides in the microtubule organizing center. Its subcellular location is the spindle pole body. In terms of biological role, has a role in the RNA interference (RNAi) pathway which is important for heterochromatin formation and accurate chromosome segregation. A member of the RNA-induced transcriptional silencing (RITS) complex which is involved in the biosynthesis of dsRNA from primer siRNAs provided by the RNA-directed RNA polymerase (RDRC) complex. This chain is RNA-induced transcriptional silencing complex protein tas3 (tas3), found in Schizosaccharomyces pombe (strain 972 / ATCC 24843) (Fission yeast).